Consider the following 929-residue polypeptide: Patatin-like phospholipase domain-containing protein CNE02340 (929 aa).

A disordered region spans residues 37–85; sequence QPLDGDSSPLSPRSFSLPPESPQLSTASVKAPPPTWKYGPDNGTLRSGR. Residues 43–54 show a composition bias toward low complexity; sequence SSPLSPRSFSLP. Residues 126–146 traverse the membrane as a helical segment; sequence WPLLFFIFFIIYLEFSAYVIT. In terms of domain architecture, PNPLA spans 301–493; it reads LCLSGGASFG…REDIPLGSLH (193 aa). The GXSXG motif lies at 332-336; it reads GTSAG. Catalysis depends on Ser-334, which acts as the Nucleophile. The Proton acceptor role is filled by Asp-480. Disordered stretches follow at residues 644–765, 778–806, and 818–929; these read ALSH…NFGD, LSSPFRSIRSNTSSSSNNVQSPSSSQRFR, and VSES…QDGA. 2 stretches are compositionally biased toward polar residues: residues 652–664 and 745–764; these read NDPATSLPETNPE and PTHSPIATESPQRNYTSNFG. Positions 779-806 are enriched in low complexity; the sequence is SSPFRSIRSNTSSSSNNVQSPSSSQRFR. Residues 856 to 878 are compositionally biased toward basic and acidic residues; sequence VESHSDRSEDEMLHSGANVKEEY.

This sequence belongs to the PLPL family.

The protein resides in the membrane. Its function is as follows. Probable lipid hydrolase. This Cryptococcus neoformans var. neoformans serotype D (strain JEC21 / ATCC MYA-565) (Filobasidiella neoformans) protein is Patatin-like phospholipase domain-containing protein CNE02340.